The chain runs to 265 residues: Flavin-dependent thymidylate synthase (265 aa).

The ThyX domain occupies 11–224 (GFLKLIDFMG…PIAFNSFENH (214 aa)). FAD is bound by residues Ser-56, 79–81 (RHR), and Glu-87. 76–79 (QWMR) lines the dUMP pocket. Positions 79–89 (RHRTARINEVS) match the ThyX motif motif. Arg-155 provides a ligand contact to dUMP. FAD contacts are provided by residues 171 to 173 (DLN) and His-177. Arg-182 is a binding site for dUMP. Arg-182 (involved in ionization of N3 of dUMP, leading to its activation) is an active-site residue.

Belongs to the thymidylate synthase ThyX family. Homotetramer. Requires FAD as cofactor.

The catalysed reaction is dUMP + (6R)-5,10-methylene-5,6,7,8-tetrahydrofolate + NADPH + H(+) = dTMP + (6S)-5,6,7,8-tetrahydrofolate + NADP(+). It participates in pyrimidine metabolism; dTTP biosynthesis. Functionally, catalyzes the reductive methylation of 2'-deoxyuridine-5'-monophosphate (dUMP) to 2'-deoxythymidine-5'-monophosphate (dTMP) while utilizing 5,10-methylenetetrahydrofolate (mTHF) as the methyl donor, and NADPH and FADH(2) as the reductant. In Borreliella burgdorferi (strain ATCC 35210 / DSM 4680 / CIP 102532 / B31) (Borrelia burgdorferi), this protein is Flavin-dependent thymidylate synthase.